The sequence spans 502 residues: Lysine--tRNA ligase (502 aa).

Mg(2+) contacts are provided by Glu-398 and Glu-405.

The protein belongs to the class-II aminoacyl-tRNA synthetase family. As to quaternary structure, homodimer. Mg(2+) is required as a cofactor.

It localises to the cytoplasm. It catalyses the reaction tRNA(Lys) + L-lysine + ATP = L-lysyl-tRNA(Lys) + AMP + diphosphate. The protein is Lysine--tRNA ligase of Thermotoga sp. (strain RQ2).